The chain runs to 460 residues: Probable elastin-binding protein EbpS (460 aa).

The segment covering 1-40 has biased composition (basic and acidic residues); that stretch reads MSNNNFKDDFEKNRQSINPDEHQTELKEDDKTNENKKEAD. The interval 1 to 277 is disordered; the sequence is MSNNNFKDDF…NQYNDQSEGK (277 aa). Over residues 41-57 the composition is skewed to low complexity; it reads SQNSLSNNSNQQFPPRN. The span at 74–128 shows a compositional bias: basic and acidic residues; sequence QQDDKHQKNSDAKTTEGSLDDRYDEAQLQQQHDKSQQQNKTEKQSQDNRMKDGKD. Positions 177-192 are enriched in low complexity; it reads ATGAGIAGAAGVAGAA. The segment covering 203–226 has biased composition (basic and acidic residues); the sequence is DKQDSKHSNHENDEKSVKNDDQKQ. Over residues 264–273 the composition is skewed to low complexity; it reads SNQNNQYNDQ. Residues 285–305 form a helical membrane-spanning segment; that stretch reads ILLPLIAAILILGAIAIFGGM. Over residues 313–359 the composition is skewed to basic and acidic residues; the sequence is SKSDDQKIANQSKKDSDKKDGAQSEDNKDKKSDSNKDKKSDSDKNAD. Residues 313-411 are disordered; that stretch reads SKSDDQKIAN…NQQATQGQQS (99 aa). A compositionally biased stretch (low complexity) spans 364 to 411; it reads NSSSNPNATSTNNNDNVANNNSNYTNQNQQDNANQNSNNQQATQGQQS. One can recognise a LysM domain in the interval 410–458; it reads QSHTVYGQENLYRIAIQYYGEGTQANVDKIKRANGLSSNNIHNGQTLVI.

It is found in the cell membrane. In Staphylococcus epidermidis (strain ATCC 35984 / DSM 28319 / BCRC 17069 / CCUG 31568 / BM 3577 / RP62A), this protein is Probable elastin-binding protein EbpS (ebpS).